The chain runs to 160 residues: Keratin-associated protein 13-4 (160 aa).

4 consecutive repeat copies span residues 41-50 (CQLRSSLYRD), 51-60 (CQKTCWEPAS), 61-70 (CQKSCYRPRT), and 77-86 (CQTTCSGSLG). Residues 41–86 (CQLRSSLYRDCQKTCWEPASCQKSCYRPRTSILCCPCQTTCSGSLG) are 4 X 10 AA approximate repeats.

Belongs to the PMG family. In terms of assembly, interacts with hair keratins.

Functionally, in the hair cortex, hair keratin intermediate filaments are embedded in an interfilamentous matrix, consisting of hair keratin-associated proteins (KRTAP), which are essential for the formation of a rigid and resistant hair shaft through their extensive disulfide bond cross-linking with abundant cysteine residues of hair keratins. The matrix proteins include the high-sulfur and high-glycine-tyrosine keratins. In Homo sapiens (Human), this protein is Keratin-associated protein 13-4 (KRTAP13-4).